The chain runs to 462 residues: Glycine--tRNA ligase (462 aa).

Substrate contacts are provided by R98 and E174. Residues 206–208, 216–221, 290–291, and 334–337 contribute to the ATP site; these read RNE, FRTREF, EL, and GADR. 221-225 serves as a coordination point for substrate; it reads FEQME. Substrate is bound at residue 330-334; the sequence is EPSLG.

It belongs to the class-II aminoacyl-tRNA synthetase family. As to quaternary structure, homodimer.

Its subcellular location is the cytoplasm. It catalyses the reaction tRNA(Gly) + glycine + ATP = glycyl-tRNA(Gly) + AMP + diphosphate. Its function is as follows. Catalyzes the attachment of glycine to tRNA(Gly). This chain is Glycine--tRNA ligase, found in Lachnoclostridium phytofermentans (strain ATCC 700394 / DSM 18823 / ISDg) (Clostridium phytofermentans).